Reading from the N-terminus, the 766-residue chain is UPF0313 protein PP_4872 (766 aa).

Positions 371-649 (AYEMIRFSVN…KAFLRYHDPK (279 aa)) constitute a Radical SAM core domain. The [4Fe-4S] cluster site is built by Cys-385, Cys-389, and Cys-392. The segment at 670–766 (GKHQLIPLHQ…KKPRQPVIPR (97 aa)) is disordered. The segment covering 723 to 735 (KPWDKREKAKAEA) has biased composition (basic and acidic residues).

The protein belongs to the UPF0313 family. It depends on [4Fe-4S] cluster as a cofactor.

This chain is UPF0313 protein PP_4872, found in Pseudomonas putida (strain ATCC 47054 / DSM 6125 / CFBP 8728 / NCIMB 11950 / KT2440).